We begin with the raw amino-acid sequence, 435 residues long: Fibrous sheath-interacting protein 1 (435 aa).

Disordered regions lie at residues 1–109 (MPMD…DPKL) and 354–393 (SQSH…ESRL). Residues 18 to 32 (SSSRSRPGSRSSNGS) show a composition bias toward low complexity. The span at 50–63 (KLNSGQEGHTSNSG) shows a compositional bias: polar residues. Positions 64 to 87 (VEERRNSNDAKWADDSKTKPAKES) are enriched in basic and acidic residues. Phosphoserine is present on residues Ser87 and Ser88. The stretch at 108–154 (KLEETNAVLQNAIRKMHRLDKLLAKKQCREKEVKKQGLEMRVKLWEE) forms a coiled coil. 2 stretches are compositionally biased toward basic and acidic residues: residues 355 to 371 (QSHK…ERNT) and 378 to 393 (KILR…ESRL).

This sequence belongs to the FSIP1 family. May interact with AKAP4. Detected in male germ cells and testis.

This Mus musculus (Mouse) protein is Fibrous sheath-interacting protein 1 (Fsip1).